The primary structure comprises 518 residues: Bifunctional purine biosynthesis protein PurH (518 aa).

The MGS-like domain occupies 1–146 (MSPIALLSVS…KNHQDVLVVT (146 aa)).

It belongs to the PurH family.

The catalysed reaction is (6R)-10-formyltetrahydrofolate + 5-amino-1-(5-phospho-beta-D-ribosyl)imidazole-4-carboxamide = 5-formamido-1-(5-phospho-D-ribosyl)imidazole-4-carboxamide + (6S)-5,6,7,8-tetrahydrofolate. The enzyme catalyses IMP + H2O = 5-formamido-1-(5-phospho-D-ribosyl)imidazole-4-carboxamide. It participates in purine metabolism; IMP biosynthesis via de novo pathway; 5-formamido-1-(5-phospho-D-ribosyl)imidazole-4-carboxamide from 5-amino-1-(5-phospho-D-ribosyl)imidazole-4-carboxamide (10-formyl THF route): step 1/1. Its pathway is purine metabolism; IMP biosynthesis via de novo pathway; IMP from 5-formamido-1-(5-phospho-D-ribosyl)imidazole-4-carboxamide: step 1/1. This is Bifunctional purine biosynthesis protein PurH from Prochlorococcus marinus (strain NATL2A).